The chain runs to 220 residues: Fructose-6-phosphate aldolase 1 (220 aa).

The Schiff-base intermediate with substrate role is filled by K85.

The protein belongs to the transaldolase family. Type 3A subfamily. In terms of assembly, homodecamer.

The protein localises to the cytoplasm. The enzyme catalyses beta-D-fructose 6-phosphate = dihydroxyacetone + D-glyceraldehyde 3-phosphate. Catalyzes the reversible formation of fructose 6-phosphate from dihydroxyacetone and D-glyceraldehyde 3-phosphate via an aldolization reaction. In Escherichia coli O157:H7, this protein is Fructose-6-phosphate aldolase 1 (fsaA).